A 351-amino-acid chain; its full sequence is Signal recognition particle receptor FtsY (351 aa).

Residues 152–159 (GVNGSGKT), 235–239 (DTAGR), and 299–302 (TKMD) contribute to the GTP site.

This sequence belongs to the GTP-binding SRP family. FtsY subfamily. As to quaternary structure, part of the signal recognition particle protein translocation system, which is composed of SRP and FtsY.

Its subcellular location is the cell membrane. The protein resides in the cytoplasm. The enzyme catalyses GTP + H2O = GDP + phosphate + H(+). Involved in targeting and insertion of nascent membrane proteins into the cytoplasmic membrane. Acts as a receptor for the complex formed by the signal recognition particle (SRP) and the ribosome-nascent chain (RNC). The sequence is that of Signal recognition particle receptor FtsY from Metamycoplasma hominis (strain ATCC 23114 / DSM 25592 / NBRC 14850 / NCTC 10111 / PG21) (Mycoplasma hominis).